The sequence spans 201 residues: Protein LIGHT-DEPENDENT SHORT HYPOCOTYLS 2 (201 aa).

The span at 1–14 shows a compositional bias: polar residues; sequence MDLISQNHNNRNPN. Disordered stretches follow at residues 1-37 and 151-201; these read MDLI…YENQ and SRGV…GATQ. Low complexity predominate over residues 15 to 32; that stretch reads TSLSTQTPSSFSSPPSSS. Residues 33–160 enclose the ALOG domain; that stretch reads RYENQKRRDW…SRGVSYEKKR (128 aa). The Nuclear localization signal signature appears at 158 to 162; the sequence is KKRKR.

This sequence belongs to the plant homeotic and developmental regulators ALOG protein family.

It localises to the nucleus. Probable transcription regulator that acts as a developmental regulator by promoting cell growth in response to light. In Arabidopsis thaliana (Mouse-ear cress), this protein is Protein LIGHT-DEPENDENT SHORT HYPOCOTYLS 2 (LSH2).